Here is a 128-residue protein sequence, read N- to C-terminus: L-ectoine synthase (128 aa).

This sequence belongs to the ectoine synthase family.

It carries out the reaction (2S)-4-acetamido-2-aminobutanoate = L-ectoine + H2O. It participates in amine and polyamine biosynthesis; ectoine biosynthesis; L-ectoine from L-aspartate 4-semialdehyde: step 3/3. In terms of biological role, catalyzes the circularization of gamma-N-acetyl-alpha,gamma-diaminobutyric acid (ADABA) to ectoine (1,4,5,6-tetrahydro-2-methyl-4-pyrimidine carboxylic acid), which is an excellent osmoprotectant. The chain is L-ectoine synthase from Vibrio parahaemolyticus serotype O3:K6 (strain RIMD 2210633).